A 204-amino-acid polypeptide reads, in one-letter code: Superoxide dismutase [Mn] (204 aa).

His27 lines the Mn(2+) pocket. Phosphothreonine is present on residues Thr34 and Thr70. 3 residues coordinate Mn(2+): His82, Asp164, and His168.

This sequence belongs to the iron/manganese superoxide dismutase family. In terms of assembly, homodimer. Requires Mn(2+) as cofactor.

The enzyme catalyses 2 superoxide + 2 H(+) = H2O2 + O2. In terms of biological role, destroys superoxide anion radicals which are normally produced within the cells and which are toxic to biological systems. The protein is Superoxide dismutase [Mn] (sodA) of Bacillus caldotenax.